A 59-amino-acid polypeptide reads, in one-letter code: UPF0434 protein Sputw3181_2540 (59 aa).

The protein belongs to the UPF0434 family.

The protein is UPF0434 protein Sputw3181_2540 of Shewanella sp. (strain W3-18-1).